The sequence spans 37 residues: Potassium channel toxin alpha-KTx 15.1 (37 aa).

Q1 is subject to Pyrrolidone carboxylic acid. 3 disulfide bridges follow: C8–C28, C13–C33, and C17–C35.

It belongs to the short scorpion toxin superfamily. Potassium channel inhibitor family. Alpha-KTx 15 subfamily. In terms of tissue distribution, expressed by the venom gland.

It is found in the secreted. Its function is as follows. Blocker of voltage-gated potassium channels (600 nM of the toxin induces a block of 25% of hERG currents). May also inhibit Kv4/KCND when coexpressed with DPP6 or DPP10. In adult rat brain, it blocks the transient potassium channels in cerebellum granular cells. Blocks potassium channels by a simple 'plugging mechanism', in which a single toxin molecule finds a specific receptor site in the external vestibule of the potassium channel and thereby occludes the outer entry to the potassium conducting pore. The polypeptide is Potassium channel toxin alpha-KTx 15.1 (Androctonus australis (Sahara scorpion)).